A 540-amino-acid chain; its full sequence is NADH-ubiquinone oxidoreductase chain 4 (540 aa).

Helical transmembrane passes span 2 to 22, 35 to 55, 89 to 109, 118 to 138, 140 to 160, 172 to 192, 218 to 238, 248 to 268, 282 to 302, 310 to 330, 338 to 358, 376 to 396, 415 to 435, and 501 to 521; these read TIIA…GVIL, IFIL…LIGC, ISAI…LISI, QKFQ…FAAT, LVQL…MIGV, FQIL…IGIL, LIFI…PLHL, PTAG…YGYI, YFPI…IATL, IVAY…FSGV, IILM…IGVI, VMPI…AFPI, IIIA…SFWL, and VNIF…IIGM.

This sequence belongs to the complex I subunit 4 family.

It localises to the mitochondrion membrane. It catalyses the reaction a ubiquinone + NADH + 5 H(+)(in) = a ubiquinol + NAD(+) + 4 H(+)(out). Functionally, core subunit of the mitochondrial membrane respiratory chain NADH dehydrogenase (Complex I) that is believed to belong to the minimal assembly required for catalysis. Complex I functions in the transfer of electrons from NADH to the respiratory chain. The immediate electron acceptor for the enzyme is believed to be ubiquinone. This is NADH-ubiquinone oxidoreductase chain 4 (nad4) from Dictyostelium discoideum (Social amoeba).